The following is a 253-amino-acid chain: MRICSDQPCIVLLTEKDVWIRVNGKEPISLKANHMALLNCENNIIDVSSLNNTLVAHISHDIIKDYLRFLNKDLSQIPVWQRSATPILTLPCLTPDVFRVAAQHSMMPAETESEKERTRALLFTVLSRFLDSKKFVSLMMYMLRNCVSDSVYQIIESDIHKDWNLSMVASCLCLSPSLLKKKLKSENTSYSQIITTCRMRYAVNELMMDGKNISQVSQSCGYNSTSYFISVFKDFYGMTPLHYVSQHRERTVA.

Residues 149-246 (DSVYQIIESD…GMTPLHYVSQ (98 aa)) form the HTH araC/xylS-type domain. 2 DNA-binding regions (H-T-H motif) span residues 166–187 (SMVASCLCLSPSLLKKKLKSEN) and 213–236 (ISQVSQSCGYNSTSYFISVFKDFY).

The protein is HTH-type transcriptional regulator AdiY (adiY) of Escherichia coli (strain K12).